Here is a 288-residue protein sequence, read N- to C-terminus: Structure-specific endonuclease subunit SLX1 (288 aa).

Residues 7–90 form the GIY-YIG domain; the sequence is PFYGVYLLQS…QHPNMTRLIT (84 aa).

The protein belongs to the SLX1 family. Forms a heterodimer with SLX4. Requires a divalent metal cation as cofactor.

The protein localises to the nucleus. Functionally, catalytic subunit of the SLX1-SLX4 structure-specific endonuclease that resolves DNA secondary structures generated during DNA repair and recombination. Has endonuclease activity towards branched DNA substrates, introducing single-strand cuts in duplex DNA close to junctions with ss-DNA. In Yarrowia lipolytica (strain CLIB 122 / E 150) (Yeast), this protein is Structure-specific endonuclease subunit SLX1.